The primary structure comprises 183 residues: Transcription termination/antitermination protein NusG (183 aa).

Positions 131 to 161 constitute a KOW domain; sequence PGEEVRVTEGPFADFNGTVEEVDYEKGRLKV.

This sequence belongs to the NusG family.

Participates in transcription elongation, termination and antitermination. This Pasteurella multocida (strain Pm70) protein is Transcription termination/antitermination protein NusG.